Consider the following 275-residue polypeptide: Phosphatidylglycerol--prolipoprotein diacylglyceryl transferase (275 aa).

A run of 7 helical transmembrane segments spans residues 22–42 (LSVRWYGLMYLFGFAFAMWLA), 61–81 (LLFYGFLGVILGGRVGYVLFY), 96–116 (IWTGGMSFHGGLIGVITAMIW), 125–145 (FFTVADFVAPLIPFGLGVGRI), 177–197 (SQLYQFALEGVVLFIILNLFW), 204–224 (GAISGLFLFCYGLFRFLVEFV), and 238–258 (ISMGQILSMPMIVAGALMVWA). Arg144 contributes to the a 1,2-diacyl-sn-glycero-3-phospho-(1'-sn-glycerol) binding site.

This sequence belongs to the Lgt family.

Its subcellular location is the cell inner membrane. The catalysed reaction is L-cysteinyl-[prolipoprotein] + a 1,2-diacyl-sn-glycero-3-phospho-(1'-sn-glycerol) = an S-1,2-diacyl-sn-glyceryl-L-cysteinyl-[prolipoprotein] + sn-glycerol 1-phosphate + H(+). It functions in the pathway protein modification; lipoprotein biosynthesis (diacylglyceryl transfer). Functionally, catalyzes the transfer of the diacylglyceryl group from phosphatidylglycerol to the sulfhydryl group of the N-terminal cysteine of a prolipoprotein, the first step in the formation of mature lipoproteins. The chain is Phosphatidylglycerol--prolipoprotein diacylglyceryl transferase from Aeromonas salmonicida (strain A449).